The primary structure comprises 1221 residues: Phosphoenolpyruvate carboxylase 2 (1221 aa).

The active site involves histidine 156. Disordered stretches follow at residues 443–588 (TAAE…DPTF) and 642–661 (REPAGEAHGGVGAGGGGGGG). Composition is skewed to low complexity over residues 503–513 (TTTATAAAAAA) and 550–564 (PFREAANAAMSTAAS). 2 stretches are compositionally biased toward gly residues: residues 565-575 (GGAGGGGGGGA) and 648-661 (AHGGVGAGGGGGGG). Lysine 886 is a catalytic residue.

The protein belongs to the PEPCase type 1 family. The cofactor is Mg(2+).

It is found in the cytoplasm. The catalysed reaction is oxaloacetate + phosphate = phosphoenolpyruvate + hydrogencarbonate. Its function is as follows. Through the carboxylation of phosphoenolpyruvate (PEP) it forms oxaloacetate, a four-carbon dicarboxylic acid source for the tricarboxylic acid cycle. The protein is Phosphoenolpyruvate carboxylase 2 of Chlamydomonas reinhardtii (Chlamydomonas smithii).